Reading from the N-terminus, the 365-residue chain is MTDSQQSKPKHVMMMAAGTGGHVFPALAVAKQLQQQGCQVSWLATPTGMENRLLKDQNIPIYQIDIQGVRGNGVIRKLAAPFKILKATFSAMRYMKQLKVDAVAGFGGYVAGPGGLAARLLGIPVLIHEQNAVAGFTNAQLSRVAKVVCEAFPNTFPASEKVVTTGNPVRREITDILSPKWRYDEREQADKPLNILIVGGSLGAKALNERLPPALKQLEVPLNIFHQCGQQQVEATQALYADAPANLTIQVLPFIEDMAKAYSEADLIICRAGALTVTEVATAGVAAVFVPLPIAVDDHQTANAKFLADIGAAKICQQSTMTPEVLNQLFTTLMNRQLLTEMAVKARQHAQPNATQHVVDLIQKM.

UDP-N-acetyl-alpha-D-glucosamine-binding positions include Thr19–Gly21, Asn131, Arg170, Ser201, Ile255, Ala274–Glu279, and Gln300.

Belongs to the glycosyltransferase 28 family. MurG subfamily.

Its subcellular location is the cell inner membrane. It catalyses the reaction di-trans,octa-cis-undecaprenyl diphospho-N-acetyl-alpha-D-muramoyl-L-alanyl-D-glutamyl-meso-2,6-diaminopimeloyl-D-alanyl-D-alanine + UDP-N-acetyl-alpha-D-glucosamine = di-trans,octa-cis-undecaprenyl diphospho-[N-acetyl-alpha-D-glucosaminyl-(1-&gt;4)]-N-acetyl-alpha-D-muramoyl-L-alanyl-D-glutamyl-meso-2,6-diaminopimeloyl-D-alanyl-D-alanine + UDP + H(+). It participates in cell wall biogenesis; peptidoglycan biosynthesis. Its function is as follows. Cell wall formation. Catalyzes the transfer of a GlcNAc subunit on undecaprenyl-pyrophosphoryl-MurNAc-pentapeptide (lipid intermediate I) to form undecaprenyl-pyrophosphoryl-MurNAc-(pentapeptide)GlcNAc (lipid intermediate II). The polypeptide is UDP-N-acetylglucosamine--N-acetylmuramyl-(pentapeptide) pyrophosphoryl-undecaprenol N-acetylglucosamine transferase (Acinetobacter baumannii (strain ATCC 17978 / DSM 105126 / CIP 53.77 / LMG 1025 / NCDC KC755 / 5377)).